The following is a 416-amino-acid chain: Serine hydroxymethyltransferase (416 aa).

Residues Leu121 and 125 to 127 contribute to the (6S)-5,6,7,8-tetrahydrofolate site; that span reads GHL. At Lys230 the chain carries N6-(pyridoxal phosphate)lysine. 355 to 357 serves as a coordination point for (6S)-5,6,7,8-tetrahydrofolate; that stretch reads SPF.

It belongs to the SHMT family. As to quaternary structure, homodimer. Requires pyridoxal 5'-phosphate as cofactor.

Its subcellular location is the cytoplasm. It catalyses the reaction (6R)-5,10-methylene-5,6,7,8-tetrahydrofolate + glycine + H2O = (6S)-5,6,7,8-tetrahydrofolate + L-serine. Its pathway is one-carbon metabolism; tetrahydrofolate interconversion. It functions in the pathway amino-acid biosynthesis; glycine biosynthesis; glycine from L-serine: step 1/1. In terms of biological role, catalyzes the reversible interconversion of serine and glycine with tetrahydrofolate (THF) serving as the one-carbon carrier. This reaction serves as the major source of one-carbon groups required for the biosynthesis of purines, thymidylate, methionine, and other important biomolecules. Also exhibits THF-independent aldolase activity toward beta-hydroxyamino acids, producing glycine and aldehydes, via a retro-aldol mechanism. This chain is Serine hydroxymethyltransferase, found in Streptococcus thermophilus (strain ATCC BAA-250 / LMG 18311).